A 75-amino-acid chain; its full sequence is Dermaseptin-S11 (75 aa).

Residues 1–22 form the signal peptide; sequence MAFLKKSLFLVLFLGMVSLSIC. Positions 23 to 45 are excised as a propeptide; it reads EEEKRENEDEEEQEDDEQSEEKR. A disordered region spans residues 25–44; sequence EKRENEDEEEQEDDEQSEEK. Residues 30-41 show a composition bias toward acidic residues; it reads EDEEEQEDDEQS.

It belongs to the frog skin active peptide (FSAP) family. Dermaseptin subfamily. In terms of tissue distribution, expressed by the skin glands.

The protein localises to the secreted. Its subcellular location is the target cell membrane. Its function is as follows. Antimicrobial peptide with activity against Gram-positive and Gram-negative bacteria, and fungi. Has hemolytic activity. This Phyllomedusa sauvagei (Sauvage's leaf frog) protein is Dermaseptin-S11.